The primary structure comprises 689 residues: Glycine--tRNA ligase beta subunit (689 aa).

The protein belongs to the class-II aminoacyl-tRNA synthetase family. Tetramer of two alpha and two beta subunits.

The protein resides in the cytoplasm. The enzyme catalyses tRNA(Gly) + glycine + ATP = glycyl-tRNA(Gly) + AMP + diphosphate. This Dichelobacter nodosus (strain VCS1703A) protein is Glycine--tRNA ligase beta subunit.